The following is a 447-amino-acid chain: Phosphoglucosamine mutase (447 aa).

Residue Ser-103 is the Phosphoserine intermediate of the active site. The Mg(2+) site is built by Ser-103, Asp-242, Asp-244, and Asp-246. A Phosphoserine modification is found at Ser-103.

This sequence belongs to the phosphohexose mutase family. Mg(2+) serves as cofactor. In terms of processing, activated by phosphorylation.

The catalysed reaction is alpha-D-glucosamine 1-phosphate = D-glucosamine 6-phosphate. Its function is as follows. Catalyzes the conversion of glucosamine-6-phosphate to glucosamine-1-phosphate. In Cereibacter sphaeroides (strain ATCC 17023 / DSM 158 / JCM 6121 / CCUG 31486 / LMG 2827 / NBRC 12203 / NCIMB 8253 / ATH 2.4.1.) (Rhodobacter sphaeroides), this protein is Phosphoglucosamine mutase.